A 490-amino-acid chain; its full sequence is 5'-3' exonuclease PLD3 (490 aa).

Topologically, residues 1–38 (MKPKLMYQELKVPAEEPANELPMNEIEAWKAAEKKARW) are cytoplasmic. The helical; Signal-anchor for type II membrane protein transmembrane segment at 39–59 (VLLVLILAVVGFGALMTQLFL) threads the bilayer. The Lumenal segment spans residues 60–490 (WEYGDLHLFG…DSVGNACRLL (431 aa)). Intrachain disulfides connect Cys-77-Cys-239 and Cys-81-Cys-237. N-linked (GlcNAc...) asparagine glycans are attached at residues Asn-97 and Asn-132. In terms of domain architecture, PLD phosphodiesterase 1 spans 196–223 (THGVLHTKFWVVDQTHFYLGSANMDWRS). Catalysis depends on residues His-201, Lys-203, and Asp-208. The active-site Proton donor is His-201. Positions 201 and 203 each coordinate phosphate. Asn-218 is a binding site for phosphate. Residues Asn-236, Asn-284, and Asn-387 are each glycosylated (N-linked (GlcNAc...) asparagine). A disulfide bond links Cys-366 and Cys-487. The PLD phosphodiesterase 2 domain maps to 411 to 437 (YARVNHNKYMVTERATYIGTSNWSGNY). Residue His-416 participates in phosphate binding. His-416 (nucleophile) is an active-site residue. Phe-438 contacts Mg(2+).

This sequence belongs to the phospholipase D family. Homodimer. Interacts with APP. In terms of processing, N-glycosylated. Post-translationally, proteolytically processed to a soluble form that is stable within endosomes and lysosomes. During transport through the secretory pathway becomes proteolysed by cysteine proteases, thereby releasing a stable soluble lysosomal lumenal polypeptide, whereas the transmembrane-bound fragment is rapidly degraded. Its transport route to lysosomes involves ubiquitination and the ESCRT complex. Ubiquitinated. Ubiquitination mediates sorting into lysosomes.

The protein resides in the endoplasmic reticulum membrane. The protein localises to the lysosome lumen. Its subcellular location is the early endosome membrane. It is found in the late endosome membrane. It localises to the golgi apparatus membrane. The protein resides in the endosome membrane. It carries out the reaction Exonucleolytic cleavage in the 5'- to 3'-direction to yield nucleoside 3'-phosphates.. The enzyme catalyses a 5'-end 5'-dephospho-ribonucleotidyl-ribonucleotide-RNA + H2O = a ribonucleoside 3'-phosphate + a 5'-end dephospho-ribonucleoside-RNA + H(+). It catalyses the reaction a ribonucleoside 3'-phosphate-2'-3'-cyclophospho-GMP + H2O = a ribonucleoside 3'-phosphate + 2',3'-cyclophospho-GMP + H(+). The catalysed reaction is a 5'-end 5'-dephospho-2'-deoxyribonucleotidyl-2'-deoxyribonucleotide in single-stranded DNA + H2O = a 5'-end dephospho-2'-deoxyribonucleoside in single-stranded DNA + a 2'-deoxyribonucleoside 3'-phosphate + H(+). It carries out the reaction a 5'-end 5'-phospho-2'-deoxyribonucleotide in single-stranded DNA + H2O = a 5'-end 5'-dephospho-2'-deoxyribonucleotide in single-stranded DNA + phosphate. The enzyme catalyses a 3-lyso-sn-glycero-1-phospho-(3'-acyl-1'-sn-glycerol) + a 1-acyl-sn-glycerol = a 3-acyl-sn-glycero-1-phospho-(3'-acyl-1'-sn-glycerol) + glycerol. It catalyses the reaction 3-lyso-sn-glycero-1-phospho-(3'-(9Z-octadecenoyl)-1'-sn-glycerol) + 1-(9Z-octadecenoyl)-sn-glycerol = 3-(9Z-octadecenoyl)-sn-glycero-1-phospho-(3'-(9Z-octadecenoyl)-1'-sn-glycerol) + glycerol. Functionally, 5'-&gt;3' exonuclease that hydrolyzes the phosphodiester bond of single-stranded DNA (ssDNA) and RNA molecules to form nucleoside 3'-monophosphates and 5'-end 5'-hydroxy deoxyribonucleotide/ribonucleotide fragments. Partially redundant with PLD4, can cleave all four nucleotides displaying higher efficiency for ssDNA and RNA fragments initiated with uridine and guanosine residues and lower efficiency for cytidine-initiated substrates. As a result, it does not always degrade polynucleotides to the single nucleotide level, it can stall at specific sites sparing certain fragments from exonucleolytic degradation. Processes self and pathogenic ssDNA and RNA molecules that reach the endolysosomal compartment via phagocytosis or autophagy and may serve as 'danger' signals for recognition by innate immune receptors such as toll-like receptors (TLRs). Degrades mitochondrial CpG-rich ssDNA fragments to prevent TLR9 activation and autoinflammatory response, but it can cleave viral RNA to generate ligands for TLR7 activation and initiate antiviral immune responses. In plasmacytoid dendritic cells, it cooperates with endonuclease RNASET2 to release 2',3'-cyclic guanosine monophosphate (2',3'-cGMP), a potent stimulatory ligand for TLR7. Produces 2',3'-cGMPs and cytidine-rich RNA fragments that occupy TLR7 ligand-binding pockets and trigger a signaling-competent state. Can exert polynucleotide phosphatase activity toward 5'-phosphorylated ssDNA substrates although at a slow rate. Transphosphatidylase that catalyzes the exchange with R to S stereo-inversion of the glycerol moiety between (S,R)-lysophosphatidylglycerol (LPG) and monoacylglycerol (MAG) substrates to yield (S,S)-bis(monoacylglycero)phosphate (BMP). Can synthesize a variety of (S,S)-BMPs representing the main phospholipid constituent of lysosomal intralumenal vesicle (ILV) membranes that bind acid hydrolases for lipid degradation. Regulates the homeostasis and interorganellar communication of the endolysosomal system with an overall impact on cellular removal of dysfunctional organelles via autophagy as well as proper protein and lipid turnover. May play a role in myotube formation in response to ER stress. This Macaca fascicularis (Crab-eating macaque) protein is 5'-3' exonuclease PLD3 (PLD3).